A 209-amino-acid chain; its full sequence is Large ribosomal subunit protein uL3 (209 aa).

Belongs to the universal ribosomal protein uL3 family. In terms of assembly, part of the 50S ribosomal subunit. Forms a cluster with proteins L14 and L19.

Its function is as follows. One of the primary rRNA binding proteins, it binds directly near the 3'-end of the 23S rRNA, where it nucleates assembly of the 50S subunit. This is Large ribosomal subunit protein uL3 from Clostridium tetani (strain Massachusetts / E88).